An 886-amino-acid chain; its full sequence is Valine--tRNA ligase (886 aa).

The 'HIGH' region motif lies at 53–63 (PNVTGSLHMGH). A 'KMSKS' region motif is present at residues 540-544 (KMSKS). Lys-543 contacts ATP. Residues 819–851 (TIDVAAERRRLEKELAGAQKELASTAAKLANAD) are a coiled coil.

This sequence belongs to the class-I aminoacyl-tRNA synthetase family. ValS type 1 subfamily. Monomer.

The protein resides in the cytoplasm. It carries out the reaction tRNA(Val) + L-valine + ATP = L-valyl-tRNA(Val) + AMP + diphosphate. Catalyzes the attachment of valine to tRNA(Val). As ValRS can inadvertently accommodate and process structurally similar amino acids such as threonine, to avoid such errors, it has a 'posttransfer' editing activity that hydrolyzes mischarged Thr-tRNA(Val) in a tRNA-dependent manner. The protein is Valine--tRNA ligase of Mycobacterium tuberculosis (strain CDC 1551 / Oshkosh).